We begin with the raw amino-acid sequence, 94 residues long: Co-chaperonin GroES (94 aa).

The protein belongs to the GroES chaperonin family. In terms of assembly, heptamer of 7 subunits arranged in a ring. Interacts with the chaperonin GroEL.

The protein resides in the cytoplasm. Its function is as follows. Together with the chaperonin GroEL, plays an essential role in assisting protein folding. The GroEL-GroES system forms a nano-cage that allows encapsulation of the non-native substrate proteins and provides a physical environment optimized to promote and accelerate protein folding. GroES binds to the apical surface of the GroEL ring, thereby capping the opening of the GroEL channel. The chain is Co-chaperonin GroES from Heliobacterium modesticaldum (strain ATCC 51547 / Ice1).